A 118-amino-acid polypeptide reads, in one-letter code: Large ribosomal subunit protein bL20 (118 aa).

The protein belongs to the bacterial ribosomal protein bL20 family.

Binds directly to 23S ribosomal RNA and is necessary for the in vitro assembly process of the 50S ribosomal subunit. It is not involved in the protein synthesizing functions of that subunit. The chain is Large ribosomal subunit protein bL20 from Azotobacter vinelandii (strain DJ / ATCC BAA-1303).